We begin with the raw amino-acid sequence, 227 residues long: Orotidine 5'-phosphate decarboxylase (227 aa).

Substrate-binding positions include Asp-8, Lys-30, Asp-59 to Thr-68, Thr-118, Arg-178, Gln-187, Gly-207, and Arg-208. Lys-61 functions as the Proton donor in the catalytic mechanism.

It belongs to the OMP decarboxylase family. Type 1 subfamily. In terms of assembly, homodimer.

It catalyses the reaction orotidine 5'-phosphate + H(+) = UMP + CO2. The protein operates within pyrimidine metabolism; UMP biosynthesis via de novo pathway; UMP from orotate: step 2/2. Catalyzes the decarboxylation of orotidine 5'-monophosphate (OMP) to uridine 5'-monophosphate (UMP). This Sulfurimonas denitrificans (strain ATCC 33889 / DSM 1251) (Thiomicrospira denitrificans (strain ATCC 33889 / DSM 1251)) protein is Orotidine 5'-phosphate decarboxylase.